The chain runs to 341 residues: tRNA N6-adenosine threonylcarbamoyltransferase (341 aa).

Fe cation contacts are provided by His115 and His119. Residues 138 to 142, Asp171, Gly184, and Asn276 contribute to the substrate site; that span reads LVSGG. Position 304 (Asp304) interacts with Fe cation.

This sequence belongs to the KAE1 / TsaD family. Fe(2+) serves as cofactor.

It is found in the cytoplasm. It catalyses the reaction L-threonylcarbamoyladenylate + adenosine(37) in tRNA = N(6)-L-threonylcarbamoyladenosine(37) in tRNA + AMP + H(+). In terms of biological role, required for the formation of a threonylcarbamoyl group on adenosine at position 37 (t(6)A37) in tRNAs that read codons beginning with adenine. Is involved in the transfer of the threonylcarbamoyl moiety of threonylcarbamoyl-AMP (TC-AMP) to the N6 group of A37, together with TsaE and TsaB. TsaD likely plays a direct catalytic role in this reaction. The protein is tRNA N6-adenosine threonylcarbamoyltransferase of Stenotrophomonas maltophilia (strain K279a).